Reading from the N-terminus, the 383-residue chain is MLRSSLGLRIPEGMHDLLPDELALQERAEASALDLFKAWAYQKVVTPTLEYGACIQPVEEEEDSFFKLFDRQGHVLVLRPELTTPIARMVSTRMRGTTFPLRLCYAADVFRYSKSHKQEFRQVGVELIGSASPAADAEVVALAIEALRQIGGMDFQINLGHMGIFTGIMAELGVPQEFQLHYQEKLARKDFVGIERLVKDYGFELKVQDVLLKLPHLHGQEDMLDQVLEWSRRPSLLEAVAALRQVYRYLKDFGVQDYVSLDLGILRGFSYYTGAVFEGYVPGVGFPVVEGGRYDALYGEFGEDVPATGFAINLKAIIEQMACSNAESPEVFVCGSDVSQVIAEARKLRQTGKRVEMCLEPLTREQAVASADRKGIKEIVCVR.

The protein belongs to the class-II aminoacyl-tRNA synthetase family. HisZ subfamily. In terms of assembly, heteromultimer composed of HisG and HisZ subunits.

Its subcellular location is the cytoplasm. It functions in the pathway amino-acid biosynthesis; L-histidine biosynthesis; L-histidine from 5-phospho-alpha-D-ribose 1-diphosphate: step 1/9. Functionally, required for the first step of histidine biosynthesis. May allow the feedback regulation of ATP phosphoribosyltransferase activity by histidine. The polypeptide is ATP phosphoribosyltransferase regulatory subunit (Desulfitobacterium hafniense (strain DSM 10664 / DCB-2)).